A 538-amino-acid chain; its full sequence is Endoglucanase 16 (538 aa).

The signal sequence occupies residues 1–26; sequence MRWRRVGDVVAVALLLGAAAAAAAAA. The Nucleophile role is filled by D83. Active-site residues include H431, D483, and E492. The segment at 513 to 538 is disordered; it reads RQESPSTTTTTTATTSSPEMGLSVNR. Residues 516–530 are compositionally biased toward low complexity; sequence SPSTTTTTTATTSSP.

Belongs to the glycosyl hydrolase 9 (cellulase E) family.

Its subcellular location is the secreted. It catalyses the reaction Endohydrolysis of (1-&gt;4)-beta-D-glucosidic linkages in cellulose, lichenin and cereal beta-D-glucans.. In Oryza sativa subsp. japonica (Rice), this protein is Endoglucanase 16.